A 185-amino-acid polypeptide reads, in one-letter code: Elongation factor P (185 aa).

The protein belongs to the elongation factor P family.

It localises to the cytoplasm. It functions in the pathway protein biosynthesis; polypeptide chain elongation. Involved in peptide bond synthesis. Stimulates efficient translation and peptide-bond synthesis on native or reconstituted 70S ribosomes in vitro. Probably functions indirectly by altering the affinity of the ribosome for aminoacyl-tRNA, thus increasing their reactivity as acceptors for peptidyl transferase. This is Elongation factor P from Bordetella avium (strain 197N).